The following is a 102-amino-acid chain: Small ribosomal subunit protein uS10 (102 aa).

Belongs to the universal ribosomal protein uS10 family. In terms of assembly, part of the 30S ribosomal subunit.

In terms of biological role, involved in the binding of tRNA to the ribosomes. The sequence is that of Small ribosomal subunit protein uS10 from Rhodopseudomonas palustris (strain BisB18).